Consider the following 274-residue polypeptide: Exosome complex component Rrp42 (274 aa).

This sequence belongs to the RNase PH family. Rrp42 subfamily. In terms of assembly, component of the archaeal exosome complex. Forms a hexameric ring-like arrangement composed of 3 Rrp41-Rrp42 heterodimers. The hexameric ring associates with a trimer of Rrp4 and/or Csl4 subunits.

Its subcellular location is the cytoplasm. In terms of biological role, non-catalytic component of the exosome, which is a complex involved in RNA degradation. Contributes to the structuring of the Rrp41 active site. The protein is Exosome complex component Rrp42 of Pyrococcus horikoshii (strain ATCC 700860 / DSM 12428 / JCM 9974 / NBRC 100139 / OT-3).